Here is a 154-residue protein sequence, read N- to C-terminus: SKP1-like protein 13 (154 aa).

An interaction with the F-box domain of F-box proteins region spans residues 96-154 (MLAANYLNIKDLLDLGCQTVADMITGKKPDEIRALLGIENDFTPEEEEEIRKENQWAFE).

It belongs to the SKP1 family. As to quaternary structure, part of a SCF (SKP1-cullin-F-box) protein ligase complex. Interacts with ADO3/FKF1, EBF1, PP2A13, SKIP15, SKIP16, CPR1/CPR30, At1g55000, At3g61590, At1g67340, At1g78100, At3g04660, At4g38940, At4g39550 and At5g49610. In terms of tissue distribution, mostly expressed in inflorescences, and, to a lower extent, in seedlings and siliques. Also detected in cotyledons, leaves, pollen and seeds.

The protein resides in the nucleus. The protein operates within protein modification; protein ubiquitination. In terms of biological role, involved in ubiquitination and subsequent proteasomal degradation of target proteins. Together with CUL1, RBX1 and a F-box protein, it forms a SCF E3 ubiquitin ligase complex. The functional specificity of this complex depends on the type of F-box protein. In the SCF complex, it serves as an adapter that links the F-box protein to CUL1. The polypeptide is SKP1-like protein 13 (ASK13) (Arabidopsis thaliana (Mouse-ear cress)).